The sequence spans 778 residues: NAD-dependent deacetylase sir2B (778 aa).

9 ANK repeats span residues 83-112 (LNWT…EISI), 114-142 (RYTA…VPNG), 148-178 (DMET…SMNS), 191-221 (HGVS…DINS), 225-255 (DNST…ELMN), 260-289 (YGNS…KIII), 317-354 (DGST…QVNG), 358-390 (GNAT…DPTI), and 394-423 (YGWT…LTNS). Residues 438–458 (SSTSTSSSSSSSSSSSSSSSS) form a disordered region. In terms of domain architecture, Deacetylase sirtuin-type spans 465–778 (KEELKLKGIE…DYFNTLFNSF (314 aa)). Residue His608 is the Proton acceptor of the active site. Residues Cys616, Cys619, Cys642, and Cys647 each contribute to the Zn(2+) site. Residues 727-746 (KLKQQQENESGESSNDNDNN) form a disordered region. Residues 733–746 (ENESGESSNDNDNN) show a composition bias toward low complexity.

This sequence belongs to the sirtuin family. Requires Zn(2+) as cofactor.

It catalyses the reaction N(6)-acetyl-L-lysyl-[protein] + NAD(+) + H2O = 2''-O-acetyl-ADP-D-ribose + nicotinamide + L-lysyl-[protein]. NAD-dependent deacetylase, which plays an important role in the regulation of transcriptional repression. The polypeptide is NAD-dependent deacetylase sir2B (sir2B) (Dictyostelium discoideum (Social amoeba)).